Here is an 860-residue protein sequence, read N- to C-terminus: Leucine--tRNA ligase (860 aa).

Positions 42–52 (PYPSGRLHMGH) match the 'HIGH' region motif. Residues 619–623 (KMSKS) carry the 'KMSKS' region motif. Lys-622 provides a ligand contact to ATP.

The protein belongs to the class-I aminoacyl-tRNA synthetase family.

Its subcellular location is the cytoplasm. It carries out the reaction tRNA(Leu) + L-leucine + ATP = L-leucyl-tRNA(Leu) + AMP + diphosphate. The chain is Leucine--tRNA ligase from Photorhabdus laumondii subsp. laumondii (strain DSM 15139 / CIP 105565 / TT01) (Photorhabdus luminescens subsp. laumondii).